We begin with the raw amino-acid sequence, 286 residues long: Pantothenate synthetase (286 aa).

31–38 contributes to the ATP binding site; sequence MGALHDGH. His-38 functions as the Proton donor in the catalytic mechanism. Gln-62 contributes to the (R)-pantoate binding site. A beta-alanine-binding site is contributed by Gln-62. 148–151 is an ATP binding site; it reads GKKD. Gln-154 serves as a coordination point for (R)-pantoate. ATP contacts are provided by residues Val-177 and 185–188; that span reads KSSR.

It belongs to the pantothenate synthetase family. Homodimer.

The protein localises to the cytoplasm. The catalysed reaction is (R)-pantoate + beta-alanine + ATP = (R)-pantothenate + AMP + diphosphate + H(+). It functions in the pathway cofactor biosynthesis; (R)-pantothenate biosynthesis; (R)-pantothenate from (R)-pantoate and beta-alanine: step 1/1. Functionally, catalyzes the condensation of pantoate with beta-alanine in an ATP-dependent reaction via a pantoyl-adenylate intermediate. The chain is Pantothenate synthetase from Staphylococcus carnosus (strain TM300).